The following is a 258-amino-acid chain: Isoprenyl transferase 2 (258 aa).

Aspartate 35 is a catalytic residue. Position 35 (aspartate 35) interacts with Mg(2+). Substrate is bound by residues 36–39 (GNRR), tryptophan 40, arginine 50, and 81–83 (SDD). Catalysis depends on asparagine 84, which acts as the Proton acceptor. Residues arginine 87, arginine 207, and 213–215 (RLS) each bind substrate. Glutamate 226 contributes to the Mg(2+) binding site.

The protein belongs to the UPP synthase family. In terms of assembly, homodimer. It depends on Mg(2+) as a cofactor.

Its function is as follows. Catalyzes the condensation of isopentenyl diphosphate (IPP) with allylic pyrophosphates generating different type of terpenoids. The sequence is that of Isoprenyl transferase 2 from Streptomyces coelicolor (strain ATCC BAA-471 / A3(2) / M145).